The chain runs to 298 residues: Beta-soluble NSF attachment protein (298 aa).

This sequence belongs to the SNAP family. Interacts with PRKCABP, and disrupts the interaction between GRIA2 and PRKCABP, leading to the internalization of GRIA2. Brain.

It localises to the membrane. Its function is as follows. Required for vesicular transport between the endoplasmic reticulum and the Golgi apparatus. The polypeptide is Beta-soluble NSF attachment protein (NAPB) (Bos taurus (Bovine)).